Here is a 482-residue protein sequence, read N- to C-terminus: Lipoamide acyltransferase component of branched-chain alpha-keto acid dehydrogenase complex, mitochondrial (482 aa).

A mitochondrion-targeting transit peptide spans 1–61; sequence MAAARVLRTW…HSLRTAAVLQ (61 aa). A Lipoyl-binding domain is found at 64–139; sequence VVQFKLSDIG…YVGKPLIDIE (76 aa). The residue at position 105 (K105) is an N6-lipoyllysine. Position 133 is an N6-succinyllysine (K133). Residues 145-160 form a critical for association with PPM1K region; it reads DSEEDVVETPAVSHDE. The region spanning 172 to 209 is the Peripheral subunit-binding (PSBD) domain; sequence LATPAVRRLAMENNIKLSEVVGSGKDGRILKEDILSFL. An N6-acetyllysine; alternate modification is found at K196. K196 is modified (N6-succinyllysine; alternate). K202 carries the post-translational modification N6-acetyllysine. Residues 217–252 are disordered; the sequence is LPPSPKSEITPPPPQPKDRTFPTPIAKPPVFTGKDR. Over residues 218–231 the composition is skewed to pro residues; that stretch reads PPSPKSEITPPPPQ. S220 is subject to Phosphoserine. 2 positions are modified to N6-acetyllysine: K243 and K250. K261 bears the N6-succinyllysine mark. K289 carries the N6-acetyllysine; alternate modification. N6-succinyllysine; alternate is present on K289. R291 is a binding site for CoA. An N6-acetyllysine mark is found at K295 and K304. CoA is bound by residues S306, D349, Q378, S399, N400, S403, G424, and I426. K435 bears the N6-acetyllysine mark. K440 carries the post-translational modification N6-acetyllysine; alternate. At K440 the chain carries N6-succinyllysine; alternate. Residues H452 and D456 contribute to the active site.

Belongs to the 2-oxoacid dehydrogenase family. As to quaternary structure, forms a 24-polypeptide structural core with octahedral symmetry that represents the E2 component of the branched-chain alpha-ketoacid dehydrogenase (BCKDH) complex. The BCKDH complex is composed of three major building blocks E1, E2 and E3. It is organized around E2, a 24-meric cubic core composed of DBT, to which are associated 6 to 12 copies of E1, and approximately 6 copies of the dehydrogenase E3, a DLD dimer. Interacts with PPM1K with a 24:1 stoichiometry; the N-terminal region (residues 49-61) of PPM1K and C-terminal linker of the lipoyl domain of DBT/E2 (residues 145-160) are critical for this interaction whereas the lipoyl prosthetic group is dispensable. This interaction requires colocalization in mitochondria. PPM1K competes with BCKDK for binding to DBT; this interaction is modulated by branched-chain alpha-keto acids (BCKAs). At steady state, BCKDH holoenzyme preferentially binds BCKDK and BCKDHA is phosphorylated. In response to high levels of BCKAs, BCKDK is replaced by PPM1K leading to BCKDHA dephosphorylation. It depends on (R)-lipoate as a cofactor.

The protein localises to the mitochondrion matrix. It catalyses the reaction N(6)-[(R)-dihydrolipoyl]-L-lysyl-[protein] + 2-methylpropanoyl-CoA = N(6)-[(R)-S(8)-2-methylpropanoyldihydrolipoyl]-L-lysyl-[protein] + CoA. Its function is as follows. The branched-chain alpha-keto dehydrogenase complex catalyzes the overall conversion of alpha-keto acids to acyl-CoA and CO(2). It contains multiple copies of three enzymatic components: branched-chain alpha-keto acid decarboxylase (E1), lipoamide acyltransferase (E2) and lipoamide dehydrogenase (E3). Within this complex, the catalytic function of this enzyme is to accept, and to transfer to coenzyme A, acyl groups that are generated by the branched-chain alpha-keto acid decarboxylase component. The protein is Lipoamide acyltransferase component of branched-chain alpha-keto acid dehydrogenase complex, mitochondrial (Dbt) of Mus musculus (Mouse).